The following is a 354-amino-acid chain: Uroporphyrinogen decarboxylase (354 aa).

Substrate contacts are provided by residues 25-29 (RQAGR), Asp75, Tyr152, Thr207, and His330.

It belongs to the uroporphyrinogen decarboxylase family. Homodimer.

It is found in the cytoplasm. It carries out the reaction uroporphyrinogen III + 4 H(+) = coproporphyrinogen III + 4 CO2. The protein operates within porphyrin-containing compound metabolism; protoporphyrin-IX biosynthesis; coproporphyrinogen-III from 5-aminolevulinate: step 4/4. Its function is as follows. Catalyzes the decarboxylation of four acetate groups of uroporphyrinogen-III to yield coproporphyrinogen-III. The chain is Uroporphyrinogen decarboxylase from Xanthomonas euvesicatoria pv. vesicatoria (strain 85-10) (Xanthomonas campestris pv. vesicatoria).